Reading from the N-terminus, the 271-residue chain is Sec-independent protein translocase protein TatC (271 aa).

6 consecutive transmembrane segments (helical) span residues isoleucine 35–glutamine 55, alanine 93–isoleucine 113, tyrosine 124–tyrosine 144, isoleucine 178–methionine 198, serine 213–methionine 233, and cysteine 234–valine 254.

It belongs to the TatC family. As to quaternary structure, forms a complex with TatA.

It is found in the cell inner membrane. Functionally, part of the twin-arginine translocation (Tat) system that transports large folded proteins containing a characteristic twin-arginine motif in their signal peptide across membranes. This Koribacter versatilis (strain Ellin345) protein is Sec-independent protein translocase protein TatC.